An 865-amino-acid chain; its full sequence is Valine--tRNA ligase (865 aa).

Residues 43-53 (PNITGRIHMGH) carry the 'HIGH' region motif. Positions 523 to 527 (KMSKS) match the 'KMSKS' region motif. Residue Lys-526 coordinates ATP. Positions 797–865 (GLIDFEKEKE…RLESILRDLE (69 aa)) form a coiled coil.

Belongs to the class-I aminoacyl-tRNA synthetase family. ValS type 1 subfamily. As to quaternary structure, monomer.

It is found in the cytoplasm. It carries out the reaction tRNA(Val) + L-valine + ATP = L-valyl-tRNA(Val) + AMP + diphosphate. In terms of biological role, catalyzes the attachment of valine to tRNA(Val). As ValRS can inadvertently accommodate and process structurally similar amino acids such as threonine, to avoid such errors, it has a 'posttransfer' editing activity that hydrolyzes mischarged Thr-tRNA(Val) in a tRNA-dependent manner. This is Valine--tRNA ligase from Thermotoga maritima (strain ATCC 43589 / DSM 3109 / JCM 10099 / NBRC 100826 / MSB8).